A 325-amino-acid polypeptide reads, in one-letter code: Putative metal ion transporter ZIPCO (325 aa).

Transmembrane regions (helical) follow at residues 5–25 (TFLA…PAYI), 46–66 (IASG…VIIL), and 74–94 (LYYI…TDIL). Asn-106 and Asn-160 each carry an N-linked (GlcNAc...) asparagine glycan. 4 consecutive transmembrane segments (helical) span residues 179–199 (FFIV…MGSL), 239–259 (IYAW…IFSF), 264–284 (FVEI…SFNM), and 296–316 (HFIS…MILF).

Its subcellular location is the cytoplasmic vesicle membrane. Putative transporter for the divalent zinc and iron cations. The polypeptide is Putative metal ion transporter ZIPCO (Plasmodium falciparum (isolate 3D7)).